The primary structure comprises 339 residues: DNA-directed RNA polymerase subunit alpha (339 aa).

The segment at 1–233 (MVREEVAGST…DLFLPFLHAE (233 aa)) is alpha N-terminal domain (alpha-NTD). An alpha C-terminal domain (alpha-CTD) region spans residues 264 to 339 (KKGIPLNCIF…IDLLKNKLSF (76 aa)).

This sequence belongs to the RNA polymerase alpha chain family. In terms of assembly, in plastids the minimal PEP RNA polymerase catalytic core is composed of four subunits: alpha, beta, beta', and beta''. When a (nuclear-encoded) sigma factor is associated with the core the holoenzyme is formed, which can initiate transcription.

The protein localises to the plastid. The protein resides in the chloroplast. The enzyme catalyses RNA(n) + a ribonucleoside 5'-triphosphate = RNA(n+1) + diphosphate. In terms of biological role, DNA-dependent RNA polymerase catalyzes the transcription of DNA into RNA using the four ribonucleoside triphosphates as substrates. The protein is DNA-directed RNA polymerase subunit alpha of Heteranthelium piliferum (Elymus pilifer).